The following is a 426-amino-acid chain: Histidine--tRNA ligase (426 aa).

Belongs to the class-II aminoacyl-tRNA synthetase family. As to quaternary structure, homodimer.

The protein localises to the cytoplasm. It catalyses the reaction tRNA(His) + L-histidine + ATP = L-histidyl-tRNA(His) + AMP + diphosphate + H(+). The polypeptide is Histidine--tRNA ligase (Streptococcus thermophilus (strain CNRZ 1066)).